The sequence spans 193 residues: Interferon epsilon (193 aa).

Positions 1–21 (MINKSFFEIMLVLLASSTGFS) are cleaved as a signal peptide. Cys-53 and Cys-163 are joined by a disulfide. N-linked (GlcNAc...) asparagine glycosylation occurs at Asn-139.

This sequence belongs to the alpha/beta interferon family.

Its subcellular location is the secreted. Functionally, type I interferon required for maintaining basal levels of IFN-regulated genes, including 2'-5'-oligoadenylate synthetase, IRF7 and ISG15, in the female reproductive tract. Directly mediates protection against viral and bacterial genital infections. The polypeptide is Interferon epsilon (IFNE) (Sus scrofa (Pig)).